An 877-amino-acid chain; its full sequence is Alanine--tRNA ligase (877 aa).

Zn(2+) contacts are provided by histidine 567, histidine 571, cysteine 669, and histidine 673.

The protein belongs to the class-II aminoacyl-tRNA synthetase family. It depends on Zn(2+) as a cofactor.

The protein localises to the cytoplasm. The enzyme catalyses tRNA(Ala) + L-alanine + ATP = L-alanyl-tRNA(Ala) + AMP + diphosphate. Catalyzes the attachment of alanine to tRNA(Ala) in a two-step reaction: alanine is first activated by ATP to form Ala-AMP and then transferred to the acceptor end of tRNA(Ala). Also edits incorrectly charged Ser-tRNA(Ala) and Gly-tRNA(Ala) via its editing domain. In Rickettsia rickettsii (strain Iowa), this protein is Alanine--tRNA ligase.